A 294-amino-acid polypeptide reads, in one-letter code: 2-methoxy-6-polyprenyl-1,4-benzoquinol methylase, mitochondrial (294 aa).

Residues 1–10 constitute a mitochondrion transit peptide; that stretch reads MALRSAAGRL. S-adenosyl-L-methionine-binding positions include T100, D136, and 166-167; that span reads DA.

This sequence belongs to the class I-like SAM-binding methyltransferase superfamily. MenG/UbiE family. In terms of assembly, component of a multi-subunit COQ enzyme complex.

The protein resides in the mitochondrion inner membrane. The catalysed reaction is a 2-methoxy-6-(all-trans-polyprenyl)benzene-1,4-diol + S-adenosyl-L-methionine = a 5-methoxy-2-methyl-3-(all-trans-polyprenyl)benzene-1,4-diol + S-adenosyl-L-homocysteine + H(+). Its pathway is cofactor biosynthesis; ubiquinone biosynthesis. In terms of biological role, methyltransferase required for the conversion of 2-polyprenyl-6-methoxy-1,4-benzoquinol (DDMQH2) to 2-polyprenyl-3-methyl-6-methoxy-1,4-benzoquinol (DMQH2). This is 2-methoxy-6-polyprenyl-1,4-benzoquinol methylase, mitochondrial from Oryza sativa subsp. japonica (Rice).